A 385-amino-acid polypeptide reads, in one-letter code: MTAISLGMPSVPTKLAERRKSRQIQVGTVAVGGDAPVSVQSMTTTRTSDIGATLQQIAELTASGCQIVRVACPTQDDADALAVIARKSQIPVIADIHFQPKYVFAAIEAGCAAVRVNPGNIKQFDDKVKEIAKAAKEHGTPIRIGVNAGSLDRRLLEKYGKATPEALVESALWEASLFEEHDFRDIKISVKHNDPVVMVNAYRQLAAQCDYPLHLGVTEAGPAFQGTIKSAVAFGALLSEGIGDTIRVSLSAPPVEEIKVGIQILESLNLRQRGLEIVSCPSCGRAQVDVYKLAEEVTAGLEGMEVPLRVAVMGCVVNGPGEAREADLGVASGNGKGQIFVKGEIIKTVPESKIVETLIEEAMKIAEQMEADGIASGEPSVSVAG.

Residues Cys-280, Cys-283, Cys-315, and Glu-322 each coordinate [4Fe-4S] cluster.

It belongs to the IspG family. The cofactor is [4Fe-4S] cluster.

It catalyses the reaction (2E)-4-hydroxy-3-methylbut-2-enyl diphosphate + oxidized [flavodoxin] + H2O + 2 H(+) = 2-C-methyl-D-erythritol 2,4-cyclic diphosphate + reduced [flavodoxin]. It participates in isoprenoid biosynthesis; isopentenyl diphosphate biosynthesis via DXP pathway; isopentenyl diphosphate from 1-deoxy-D-xylulose 5-phosphate: step 5/6. Functionally, converts 2C-methyl-D-erythritol 2,4-cyclodiphosphate (ME-2,4cPP) into 1-hydroxy-2-methyl-2-(E)-butenyl 4-diphosphate. The sequence is that of 4-hydroxy-3-methylbut-2-en-1-yl diphosphate synthase (flavodoxin) 1 from Streptomyces avermitilis (strain ATCC 31267 / DSM 46492 / JCM 5070 / NBRC 14893 / NCIMB 12804 / NRRL 8165 / MA-4680).